A 405-amino-acid polypeptide reads, in one-letter code: Serpin I2 (405 aa).

A signal peptide spans 1-18; sequence MDTIFLWSLLLLFFGSQA. N-linked (GlcNAc...) asparagine glycans are attached at residues asparagine 202, asparagine 207, and asparagine 306.

The protein belongs to the serpin family. Expressed in pancreas and adipose tissues.

It is found in the secreted. This is Serpin I2 (SERPINI2) from Homo sapiens (Human).